The chain runs to 235 residues: Geranylgeranylglyceryl phosphate synthase (235 aa).

Lys-13 contacts sn-glycerol 1-phosphate. Positions 15 and 42 each coordinate Mg(2+). Sn-glycerol 1-phosphate-binding positions include 162–167, Gly-192, and 212–213; these read YVEYSG and GD.

This sequence belongs to the GGGP/HepGP synthase family. Group I subfamily. Mg(2+) serves as cofactor.

The protein resides in the cytoplasm. The catalysed reaction is sn-glycerol 1-phosphate + (2E,6E,10E)-geranylgeranyl diphosphate = sn-3-O-(geranylgeranyl)glycerol 1-phosphate + diphosphate. It participates in membrane lipid metabolism; glycerophospholipid metabolism. Its function is as follows. Prenyltransferase that catalyzes the transfer of the geranylgeranyl moiety of geranylgeranyl diphosphate (GGPP) to the C3 hydroxyl of sn-glycerol-1-phosphate (G1P). This reaction is the first ether-bond-formation step in the biosynthesis of archaeal membrane lipids. This Natronomonas pharaonis (strain ATCC 35678 / DSM 2160 / CIP 103997 / JCM 8858 / NBRC 14720 / NCIMB 2260 / Gabara) (Halobacterium pharaonis) protein is Geranylgeranylglyceryl phosphate synthase.